A 391-amino-acid chain; its full sequence is Terminal nucleotidyltransferase 5C (391 aa).

This sequence belongs to the TENT family. In terms of assembly, interacts with BCCIP and PABPC1; the interaction has no effect on TENT5C poly(A) polymerase function. Interacts with PLK4; this interaction leads to the TENT5C recruitment into the centrosome. In terms of tissue distribution, expressed by splenocytes, expression is increased in activated splenocytes.

It localises to the nucleus. It is found in the cytoplasm. The protein localises to the cytoskeleton. The protein resides in the microtubule organizing center. Its subcellular location is the centrosome. The enzyme catalyses RNA(n) + ATP = RNA(n)-3'-adenine ribonucleotide + diphosphate. Catalyzes the transfer of one adenosine molecule from an ATP to an mRNA poly(A) tail bearing a 3'-OH terminal group and enhances mRNA stability and gene expression. Can also elongate RNA oligos ending with uridine molecule, provided that the sequence is adenosine-rich. Mainly targets mRNAs encoding endoplasmic reticulum-targeted protein. This is Terminal nucleotidyltransferase 5C from Mus musculus (Mouse).